Reading from the N-terminus, the 608-residue chain is Nuclear receptor subfamily 2 group C member 1 (608 aa).

Residues 1 to 179 are required for interaction with KAT2B; sequence MASIEEIAHQ…RLQRCIAFGM (179 aa). The segment at residues 111–186 is a DNA-binding region (nuclear receptor); that stretch reads FDLCVVCGDK…FGMKQDSVQC (76 aa). NR C4-type zinc fingers lie at residues 114–134 and 150–169; these read CVVCGDKASGRHYGEVTCEGC and CRGSKDCIINKHHRNRCQYC. Phosphoserine occurs at positions 198 and 216. At Thr-221 the chain carries Phosphothreonine. At Thr-223 the chain carries Phosphothreonine; by MAPK1. A Glycyl lysine isopeptide (Lys-Gly) (interchain with G-Cter in SUMO); alternate cross-link involves residue Lys-251. Residue Lys-251 forms a Glycyl lysine isopeptide (Lys-Gly) (interchain with G-Cter in SUMO2); alternate linkage. Residues 353 to 595 form the NR LBD domain; that stretch reads GNVHLIAGDS…SVIPHILKME (243 aa). Ser-586 is modified (phosphoserine; by PKC). The required for interaction with NRIP1 stretch occupies residues 589 to 608; that stretch reads PHILKMEPADYNSQIIGHSI. A Glycyl lysine isopeptide (Lys-Gly) (interchain with G-Cter in SUMO2) cross-link involves residue Lys-593.

It belongs to the nuclear hormone receptor family. NR2 subfamily. Homodimer. Heterodimer; with NR2C2 which is required for chromatin remodeling and for binding to promoter regions such as globin DR1 repeats. Interacts with ESR1; the interaction prevents homodimerization of ESR1 and suppresses its transcriptional activity and cell growth. Interacts with NRIP1 (via its LXXLL motifs); the interaction provides corepressor activity. Interacts with HDAC3 (via the DNA-binding domain); the interaction recruits phosphorylated NR2C1 to PML bodies for sumoylation. Interacts with HDAC4 (via the DNA-binding domain). Interacts with PIAS1; the interaction is required for sumoylation of NR2C1. Interacts with UBE2I; the interaction is required for sumoylation of NR2C1. Interacts with KAT2B; the interaction acts as a corepressor of gene expression. Sumoylation requires both PIAS1 and UBE2I. Sumoylation appears to dissociate NR2C1 from the PML nuclear bodies. Enhances the interaction with NRIP1 but inhibits interaction with KAT2B. In proliferating cells, stimulation by all-trans retinoic acid, activation of MAPK1-mediated phosphorylation and recruitment to PML bodies with subsequent sumoylation, suppresses OCT4 expression. Post-translationally, phosphorylated on several serine and threonine residues. Phosphorylation on Thr-223, stimulated by all-trans retinoic acid (atRA) mediates PML location and sumoylation in proliferating cells which then modulates its association with effector molecules, KAT2B and NRIP1. Phosphorylation on Ser-586 by PKC is important for protein stability and function as activator of RARB.

It localises to the nucleus. Its subcellular location is the PML body. Its function is as follows. Orphan nuclear receptor. Binds the IR7 element in the promoter of its own gene in an autoregulatory negative feedback mechanism. Primarily repressor of a broad range of genes including ESR1 and RARB. Together with NR2C2, forms the core of the DRED (direct repeat erythroid-definitive) complex that represses embryonic and fetal globin transcription. Binds to hormone response elements (HREs) consisting of two 5'-AGGTCA-3' half site direct repeat consensus sequences. Also activator of OCT4 gene expression. Plays a fundamental role in early embryogenesis and regulates embryonic stem cell proliferation and differentiation. Mediator of retinoic acid-regulated preadipocyte proliferation. The chain is Nuclear receptor subfamily 2 group C member 1 (NR2C1) from Bos taurus (Bovine).